A 399-amino-acid polypeptide reads, in one-letter code: MNYDVILIRYGELALKGKNRDQFEEALVKSVRNVLRSFFKVKVRRNYGRMYVELHGEDAYAVMERLKRVFGISSFSPTIQVDPDIETIKEKALELVRQLNPQPRTFRVVSRRADKRYPIQSMEVNRMVATHILRALPAISVDLHEPDTIVNVEIRTEGTYISCETIKGLGGLPVGVSGKVLLLLSGGIDSPVAGWMMLKRGVTLEAIHFHSYPFTSERALQKVRDLAHKLTKWGGTVRLHVVPFTEIQTAIREKCPEDYLITIMRRFMMRISERVAENTNAKALATGESLGQVASQTLESMDTINKVISIPILRPLVAMDKVDIVDISRQIDTYELSILPYEDCCTVFTPKNPVTRPKPRLAAKFEEVLDVEALVEDAVARTEIEEITTKPKETTTDLF.

One can recognise a THUMP domain in the interval tyrosine 60–threonine 165. Residues leucine 183 to leucine 184, histidine 208 to phenylalanine 209, arginine 265, glycine 287, and glutamine 296 each bind ATP.

This sequence belongs to the ThiI family.

It localises to the cytoplasm. It carries out the reaction [ThiI sulfur-carrier protein]-S-sulfanyl-L-cysteine + a uridine in tRNA + 2 reduced [2Fe-2S]-[ferredoxin] + ATP + H(+) = [ThiI sulfur-carrier protein]-L-cysteine + a 4-thiouridine in tRNA + 2 oxidized [2Fe-2S]-[ferredoxin] + AMP + diphosphate. The enzyme catalyses [ThiS sulfur-carrier protein]-C-terminal Gly-Gly-AMP + S-sulfanyl-L-cysteinyl-[cysteine desulfurase] + AH2 = [ThiS sulfur-carrier protein]-C-terminal-Gly-aminoethanethioate + L-cysteinyl-[cysteine desulfurase] + A + AMP + 2 H(+). It participates in cofactor biosynthesis; thiamine diphosphate biosynthesis. Functionally, catalyzes the ATP-dependent transfer of a sulfur to tRNA to produce 4-thiouridine in position 8 of tRNAs, which functions as a near-UV photosensor. Also catalyzes the transfer of sulfur to the sulfur carrier protein ThiS, forming ThiS-thiocarboxylate. This is a step in the synthesis of thiazole, in the thiamine biosynthesis pathway. The sulfur is donated as persulfide by IscS. This Brevibacillus brevis (strain 47 / JCM 6285 / NBRC 100599) protein is Probable tRNA sulfurtransferase.